The following is a 434-amino-acid chain: MDSTGRQPLSQDGQPWQALASGLGFPDEDQKYWWSVMAPLLGELMKWANYPVDKQYLVLAFCHEYILPFCGPRPTAEGGIFWPTLITKDGTPFEPSLNFYKNKATLRVGYAPACELSGSNDDPINQRAPIAALEHQKRVLPQQNLKWVDNFKKAWFIDNDDAVALKARVHNELFEQAAVQCLIGYVFSDYTQVKVAMSPLWKSVQTGQQISRVIWDTFRQLGDDASSYLDCLSVLEEYTESKQAKLAQVQPSFVNFDVNLKGDYQQSRLKVYYATPCTAFDTMVQVFTLGGRLKGPEVDHAIECLRVLWPSVLAVPENHPDDQDLPRRYHSVAVTQFNFELWPGAKLPVPQIYLPTNFYGRDELEIAEGLEGFFKTLGWSEPFHAYKQNYIATCATPEGKWKAIQHDVSFSFKDSSPYVSVYYKPELSVLSSPS.

L-tryptophan contacts are provided by residues 85–86 (LI) and glutamate 94. 9 residues coordinate substrate: arginine 107, lysine 194, arginine 268, lysine 270, tyrosine 272, glutamine 351, tyrosine 353, tyrosine 418, and tyrosine 422.

It belongs to the tryptophan dimethylallyltransferase family.

The protein operates within secondary metabolite biosynthesis. Its function is as follows. Indole diterpene prenyltransferase; part of the gene cluster that mediates the biosynthesis of the indole diterpenes nodulisporic acids (NA). Nodulisporic acid A (NAA) and its chemically modified derivatives are of particular significance because of their highly potent insecticidal activity against blood-feeding arthropods and lack of observable adverse effects on mammals, in particular the tremogenicity associated with the paspaline-derived IDTs is not observed. The geranylgeranyl diphosphate (GGPP) synthase ggs1, localized outside of the cluster, is proposed to catalyze the first step in nodulisporic acid biosynthesis via conversion of farnesyl pyrophosphate and isopentyl pyrophosphate into geranylgeranyl pyrophosphate (GGPP). Condensation of indole-3-glycerol phosphate with GGPP by the prenyl transferase nodC then forms 3-geranylgeranylindole (3-GGI). Epoxidation by the FAD-dependent monooxygenase nodM leads to a single-epoxidized-GGI that is substrate of the terpene cyclase nodB for cyclization to yield emindole SB. The terminal methyl carbon, C28, of emindole SB is then oxidized by the cytochrome P450 monooxygenase nodW to produce nodulisporic acid F (NAF), the pentacyclic core of NAA. NAF is converted to nodulisporic acid E (NAE) via prenylation. This step is probably performed by one of the indole diterpene prenyltransferases nodD1 or nodD2. Several oxidation steps performed by the FAD-linked oxidoreductase nodO and one of the cytochrome P450 monooxygenase nodR, nodX or nodZ further convert NAE to nodulisporic acid D (NAD). NAD is substrate of cytochrome P450 monooxygenase nodJ to produce the precursor of nodulisporic acid C (NAC), converted to NAC by one of the indole diterpene prenyltransferases nodD1 or nodD2. The FAD-dependent monooxygenase nodY2 then oxidizes NAC to nodulisporic acid B (NAB). Finally NAB is converted to NAA by one of the cytochrome P450 monooxygenases nodR, nodX or nodZ. This chain is Indole diterpene prenyltransferase nodD2, found in Hypoxylon pulicicidum.